Consider the following 243-residue polypeptide: Orotidine 5'-phosphate decarboxylase (243 aa).

Substrate-binding positions include Asp-18, Lys-39, 66 to 75 (DLKFHDIPAT), Thr-130, Arg-192, Gln-201, Gly-221, and Arg-222. Lys-68 serves as the catalytic Proton donor.

The protein belongs to the OMP decarboxylase family. Type 1 subfamily. As to quaternary structure, homodimer.

It catalyses the reaction orotidine 5'-phosphate + H(+) = UMP + CO2. Its pathway is pyrimidine metabolism; UMP biosynthesis via de novo pathway; UMP from orotate: step 2/2. Catalyzes the decarboxylation of orotidine 5'-monophosphate (OMP) to uridine 5'-monophosphate (UMP). The protein is Orotidine 5'-phosphate decarboxylase of Synechococcus sp. (strain CC9902).